Reading from the N-terminus, the 187-residue chain is Ubiquinol-cytochrome c reductase iron-sulfur subunit (187 aa).

A helical transmembrane segment spans residues 15 to 35; the sequence is LYYATAGAGAVATGAAVWPLI. The Rieske domain occupies 89-185; sequence QLGQLVDTNA…AKFIDETTIQ (97 aa). [2Fe-2S] cluster is bound by residues cysteine 129, histidine 131, cysteine 149, and histidine 152. A disulfide bridge links cysteine 134 with cysteine 151.

The protein belongs to the Rieske iron-sulfur protein family. In terms of assembly, the main subunits of complex b-c1 are: cytochrome b, cytochrome c1 and the Rieske protein. It depends on [2Fe-2S] cluster as a cofactor.

It localises to the cell membrane. The catalysed reaction is a quinol + 2 Fe(III)-[cytochrome c](out) = a quinone + 2 Fe(II)-[cytochrome c](out) + 2 H(+)(out). Component of the ubiquinol-cytochrome c reductase complex (complex III or cytochrome b-c1 complex), which is a respiratory chain that generates an electrochemical potential coupled to ATP synthesis. This is Ubiquinol-cytochrome c reductase iron-sulfur subunit (petA) from Cereibacter sphaeroides (Rhodobacter sphaeroides).